We begin with the raw amino-acid sequence, 455 residues long: UPF0053 protein MT1890 (455 aa).

Residues asparagine 2–threonine 205 form the CNNM transmembrane domain. 4 helical membrane passes run threonine 6–alanine 26, leucine 68–leucine 88, leucine 106–valine 126, and leucine 148–valine 168. CBS domains follow at residues methionine 224–leucine 285 and leucine 286–glutamate 346.

The protein belongs to the UPF0053 family.

The protein localises to the cell membrane. The protein is UPF0053 protein MT1890 of Mycobacterium tuberculosis (strain CDC 1551 / Oshkosh).